The primary structure comprises 316 residues: tRNA uridine(34) hydroxylase (316 aa).

Residues 123 to 217 (LSDDTVVIDA…YGKDPETKGE (95 aa)) enclose the Rhodanese domain. Cysteine 177 acts as the Cysteine persulfide intermediate in catalysis.

The protein belongs to the TrhO family.

It catalyses the reaction uridine(34) in tRNA + AH2 + O2 = 5-hydroxyuridine(34) in tRNA + A + H2O. Catalyzes oxygen-dependent 5-hydroxyuridine (ho5U) modification at position 34 in tRNAs. The protein is tRNA uridine(34) hydroxylase of Staphylococcus saprophyticus subsp. saprophyticus (strain ATCC 15305 / DSM 20229 / NCIMB 8711 / NCTC 7292 / S-41).